Here is a 106-residue protein sequence, read N- to C-terminus: uncharacterized protein (106 aa).

Positions 28 to 68 are disordered; the sequence is SSANEPKKLPNKKLVSTKSHTQVNREKSKNKDTYEDYSDSN. Over residues 50–61 the composition is skewed to basic and acidic residues; that stretch reads VNREKSKNKDTY.

This is an uncharacterized protein from Acanthamoeba polyphaga (Amoeba).